The following is a 236-amino-acid chain: MQPLFKRCGAEFFGTFWLVLGGCGSAVLAAGVPQVGIGYAGVALAFGLTVLTMAYAVGHISGGHFNPAVTVGLAASGRFGWRDVPPYIVAQVVGAIVAAATLASIAQGVAGFDLVASKFAANGYGDHSPGKYSMQAALICEIVLSAGFVFVILGATDKRAPAGFAPIPIGLALTLIHLISIPVTNTSVNPARSTGPALFVGGWALEQLWLFWLAPIAGALVGALAYRLVGTPSAQR.

2 helical membrane-spanning segments follow: residues 12-32 and 37-57; these read FFGT…AAGV and IGYA…AYAV. An NPA 1 motif is present at residues 66 to 68; that stretch reads NPA. 3 helical membrane-spanning segments follow: residues 92–112, 136–156, and 163–183; these read VVGA…VAGF, AALI…LGAT, and GFAP…SIPV. An NPA 2 motif is present at residues 189–191; it reads NPA. Residues 197–217 form a helical membrane-spanning segment; that stretch reads ALFVGGWALEQLWLFWLAPIA.

It belongs to the MIP/aquaporin (TC 1.A.8) family. As to quaternary structure, homotetramer.

The protein resides in the cell inner membrane. It carries out the reaction H2O(in) = H2O(out). Channel that permits osmotically driven movement of water in both directions. It is involved in the osmoregulation and in the maintenance of cell turgor during volume expansion in rapidly growing cells. It mediates rapid entry or exit of water in response to abrupt changes in osmolarity. The sequence is that of Aquaporin Z from Bordetella bronchiseptica (strain ATCC BAA-588 / NCTC 13252 / RB50) (Alcaligenes bronchisepticus).